The primary structure comprises 212 residues: Large ribosomal subunit protein uL3 (212 aa).

Positions 140-155 (SVSHRAIGSTGQNQSP) are enriched in polar residues. A disordered region spans residues 140–166 (SVSHRAIGSTGQNQSPGKVFKGKKMPG). Q153 bears the N5-methylglutamine mark.

It belongs to the universal ribosomal protein uL3 family. Part of the 50S ribosomal subunit. Forms a cluster with proteins L14 and L19. Post-translationally, methylated by PrmB.

Functionally, one of the primary rRNA binding proteins, it binds directly near the 3'-end of the 23S rRNA, where it nucleates assembly of the 50S subunit. The chain is Large ribosomal subunit protein uL3 from Psychrobacter cryohalolentis (strain ATCC BAA-1226 / DSM 17306 / VKM B-2378 / K5).